The chain runs to 473 residues: Serine palmitoyltransferase 1 (473 aa).

Topologically, residues 1 to 15 (MATATEQWVLVEMVQ) are lumenal. The tract at residues 1 to 66 (MATATEQWVL…KEELIEEWQP (66 aa)) is interaction with SPTLC2. The chain crosses the membrane as a helical span at residues 16–36 (ALYEAPAYHLILEGILILWII). The Cytoplasmic portion of the chain corresponds to 37 to 473 (RLLFSKTYKL…IKEVAQAVLL (437 aa)). Position 164 is a phosphotyrosine; by ABL (Tyr-164).

Belongs to the class-II pyridoxal-phosphate-dependent aminotransferase family. In terms of assembly, component of the serine palmitoyltransferase (SPT) complex, which is also composed of SPTLC2 or SPTLC3 and SPTSSA or SPTSSB. The heterodimer with SPTLC2 or SPTLC3 forms the catalytic core of the enzyme, while SPTSSA or SPTSSB subunits determine substrate specificity. SPT also interacts with ORMDL proteins, especially ORMDL3, which negatively regulate SPT activity in the presence of ceramides. Forms dimers of heterodimers with SPTLC2. Interacts with RTN4. The cofactor is pyridoxal 5'-phosphate. Phosphorylation at Tyr-164 inhibits activity and promotes cell survival.

The protein resides in the endoplasmic reticulum membrane. The enzyme catalyses L-serine + hexadecanoyl-CoA + H(+) = 3-oxosphinganine + CO2 + CoA. The catalysed reaction is octadecanoyl-CoA + L-serine + H(+) = 3-oxoeicosasphinganine + CO2 + CoA. It carries out the reaction tetradecanoyl-CoA + L-serine + H(+) = 3-oxohexadecasphinganine + CO2 + CoA. It catalyses the reaction dodecanoyl-CoA + L-serine + H(+) = 3-oxotetradecasphinganine + CO2 + CoA. Its pathway is lipid metabolism; sphingolipid metabolism. With respect to regulation, SPT complex catalytic activity is negatively regulated by ORMDL proteins, including ORMDL3, in the presence of ceramides. This mechanism allows to maintain ceramide levels at sufficient concentrations for the production of complex sphingolipids, but which prevents the accumulation of ceramides to levels that trigger apoptosis. In terms of biological role, component of the serine palmitoyltransferase multisubunit enzyme (SPT) that catalyzes the initial and rate-limiting step in sphingolipid biosynthesis by condensing L-serine and activated acyl-CoA (most commonly palmitoyl-CoA) to form long-chain bases. The SPT complex is also composed of SPTLC2 or SPTLC3 and SPTSSA or SPTSSB. Within this complex, the heterodimer with SPTLC2 or SPTLC3 forms the catalytic core. The composition of the serine palmitoyltransferase (SPT) complex determines the substrate preference. The SPTLC1-SPTLC2-SPTSSA complex shows a strong preference for C16-CoA substrate, while the SPTLC1-SPTLC3-SPTSSA isozyme uses both C14-CoA and C16-CoA as substrates, with a slight preference for C14-CoA. The SPTLC1-SPTLC2-SPTSSB complex shows a strong preference for C18-CoA substrate, while the SPTLC1-SPTLC3-SPTSSB isozyme displays an ability to use a broader range of acyl-CoAs, without apparent preference. Required for adipocyte cell viability and metabolic homeostasis. This chain is Serine palmitoyltransferase 1 (SPTLC1), found in Macaca fascicularis (Crab-eating macaque).